A 515-amino-acid chain; its full sequence is 2-isopropylmalate synthase (515 aa).

The 263-residue stretch at 5–267 (VIIFDTTLRD…DTHINTQEIH (263 aa)) folds into the Pyruvate carboxyltransferase domain. Residues aspartate 14, histidine 202, histidine 204, and asparagine 238 each coordinate Mn(2+). A regulatory domain region spans residues 392 to 515 (VLDKLSAHST…VADIKNHKHH (124 aa)).

This sequence belongs to the alpha-IPM synthase/homocitrate synthase family. LeuA type 1 subfamily. In terms of assembly, homodimer. Requires Mn(2+) as cofactor.

The protein resides in the cytoplasm. It carries out the reaction 3-methyl-2-oxobutanoate + acetyl-CoA + H2O = (2S)-2-isopropylmalate + CoA + H(+). It participates in amino-acid biosynthesis; L-leucine biosynthesis; L-leucine from 3-methyl-2-oxobutanoate: step 1/4. Functionally, catalyzes the condensation of the acetyl group of acetyl-CoA with 3-methyl-2-oxobutanoate (2-ketoisovalerate) to form 3-carboxy-3-hydroxy-4-methylpentanoate (2-isopropylmalate). The chain is 2-isopropylmalate synthase from Haemophilus influenzae (strain ATCC 51907 / DSM 11121 / KW20 / Rd).